The chain runs to 259 residues: Triosephosphate isomerase (259 aa).

Residue 10–12 participates in substrate binding; the sequence is NWK. H100 functions as the Electrophile in the catalytic mechanism. The Proton acceptor role is filled by E172. Residues G178, S218, and 239–240 each bind substrate; that span reads GG.

This sequence belongs to the triosephosphate isomerase family. In terms of assembly, homodimer.

The protein localises to the cytoplasm. The catalysed reaction is D-glyceraldehyde 3-phosphate = dihydroxyacetone phosphate. It functions in the pathway carbohydrate biosynthesis; gluconeogenesis. Its pathway is carbohydrate degradation; glycolysis; D-glyceraldehyde 3-phosphate from glycerone phosphate: step 1/1. Involved in the gluconeogenesis. Catalyzes stereospecifically the conversion of dihydroxyacetone phosphate (DHAP) to D-glyceraldehyde-3-phosphate (G3P). This Corynebacterium glutamicum (strain ATCC 13032 / DSM 20300 / JCM 1318 / BCRC 11384 / CCUG 27702 / LMG 3730 / NBRC 12168 / NCIMB 10025 / NRRL B-2784 / 534) protein is Triosephosphate isomerase.